A 491-amino-acid chain; its full sequence is Cobyric acid synthase (491 aa).

The 190-residue stretch at 250 to 439 (ELNIIVIRLP…LHGIFDNGSW (190 aa)) folds into the GATase cobBQ-type domain. The active-site Nucleophile is cysteine 331. Histidine 431 is a catalytic residue.

The protein belongs to the CobB/CobQ family. CobQ subfamily.

The protein operates within cofactor biosynthesis; adenosylcobalamin biosynthesis. Its function is as follows. Catalyzes amidations at positions B, D, E, and G on adenosylcobyrinic A,C-diamide. NH(2) groups are provided by glutamine, and one molecule of ATP is hydrogenolyzed for each amidation. This is Cobyric acid synthase from Microcystis aeruginosa (strain NIES-843 / IAM M-2473).